Consider the following 943-residue polypeptide: Translation initiation factor IF-2 (943 aa).

The interval I46–P359 is disordered. The segment covering K57–A76 has biased composition (low complexity). 2 stretches are compositionally biased toward basic and acidic residues: residues S92–Q103 and A110–D124. Over residues S130–Q141 the composition is skewed to polar residues. Residues T142–R190 show a composition bias toward low complexity. Composition is skewed to basic and acidic residues over residues S191 to N205, A239 to A250, and K259 to T271. 2 stretches are compositionally biased toward low complexity: residues P289–A299 and N315–R330. A compositionally biased stretch (basic residues) spans N331–Q342. Residues P346–L358 are compositionally biased toward basic and acidic residues. A tr-type G domain is found at P444–K613. The G1 stretch occupies residues G453–T460. GTP is bound at residue G453–T460. Positions G478–H482 are G2. The tract at residues D499–G502 is G3. GTP is bound by residues D499–H503 and N553–D556. A G4 region spans residues N553–D556. The segment at S589–K591 is G5.

This sequence belongs to the TRAFAC class translation factor GTPase superfamily. Classic translation factor GTPase family. IF-2 subfamily.

It localises to the cytoplasm. In terms of biological role, one of the essential components for the initiation of protein synthesis. Protects formylmethionyl-tRNA from spontaneous hydrolysis and promotes its binding to the 30S ribosomal subunits. Also involved in the hydrolysis of GTP during the formation of the 70S ribosomal complex. This Lacticaseibacillus casei (strain BL23) (Lactobacillus casei) protein is Translation initiation factor IF-2.